Consider the following 249-residue polypeptide: Fasciclin-like arabinogalactan protein 12 (249 aa).

The N-terminal stretch at 1–24 (MEHSLIILLFTVLLLLTTTPGILS) is a signal peptide. Positions 37–181 (PTNVTKILEK…LAVYQVDKVL (145 aa)) constitute an FAS1 domain. N-linked (GlcNAc...) asparagine glycosylation is found at asparagine 39, asparagine 71, asparagine 143, asparagine 152, and asparagine 159. Residues 186–219 (VFDPRPPAPAPAPSVSKSKKKKDDSDSSSDDSPA) form a disordered region. Aspartate 220 is lipidated: GPI-anchor amidated aspartate. A propeptide spans 221–249 (ASFALRNVGSVCDAVSFCVMSVMLAWFYL) (removed in mature form).

This sequence belongs to the fasciclin-like AGP family.

It is found in the cell membrane. May be a cell surface adhesion protein. The protein is Fasciclin-like arabinogalactan protein 12 (FLA12) of Arabidopsis thaliana (Mouse-ear cress).